The sequence spans 134 residues: T-cell receptor alpha chain V region RL-5 (134 aa).

An N-terminal signal peptide occupies residues 1-20; sequence MFSASCSVTVVVLLITVRRT. The interval 21-114 is v segment; that stretch reads NGASVTQTEG…DSAVYYCALR (94 aa). A j segment region spans residues 115-134; the sequence is RGASNKLTLGTGTLLKVELN. N134 carries an N-linked (GlcNAc...) asparagine glycan.

Post-translationally, rearrangement with the C region would elongate the sequence with Ile-Thr-; which creates a potential N-glycosylation site at Asn-134.

The polypeptide is T-cell receptor alpha chain V region RL-5 (Oryctolagus cuniculus (Rabbit)).